A 1170-amino-acid chain; its full sequence is WD repeat-containing protein 35 (1170 aa).

5 WD repeats span residues 12–51 (PNNV…DDSK), 69–108 (GHSG…WYEE), 113–152 (RNKS…IWGK), 154–193 (LKGI…IMKM), and 491–528 (GTRD…LIQK).

As to quaternary structure, component of the IFT complex A (IFT-A) complex. IFT-A complex is divided into a core subcomplex composed of IFT122:IFT140:WDR19 which is associated with TULP3 and a peripheral subcomplex composed of IFT43:WDR35:TTC21B. Interacts directy with IFT122, ITF43 and TTC21B. Interacts with IFT43. Interacts with CFAP61. In terms of tissue distribution, expressed at high levels in testis and at lower levels in the brain (at protein level). Also present in other tissues, including heart, uterus, spinal cord, ovary, liver, kidney, lung, pancreas and stomach.

It is found in the cytoplasm. It localises to the cytoskeleton. The protein localises to the microtubule organizing center. Its subcellular location is the centrosome. The protein resides in the cilium axoneme. It is found in the cilium basal body. Its function is as follows. As a component of the IFT complex A (IFT-A), a complex required for retrograde ciliary transport and entry into cilia of G protein-coupled receptors (GPCRs), it is involved in ciliogenesis and ciliary protein trafficking. May promote CASP3 activation and TNF-stimulated apoptosis. The chain is WD repeat-containing protein 35 (Wdr35) from Rattus norvegicus (Rat).